Here is a 496-residue protein sequence, read N- to C-terminus: Cytochrome P450 monooxygenase ausR (496 aa).

The chain crosses the membrane as a helical span at residues 12–32 (IGLYILWTIPVLFVIFKLLAP). Cysteine 435 contacts heme.

Belongs to the cytochrome P450 family. Requires heme as cofactor.

The protein resides in the membrane. It participates in secondary metabolite biosynthesis; terpenoid biosynthesis. Functionally, cytochrome P450 monooxygenase; part of the gene cluster B that mediates the biosynthesis of the fungal meroterpenoid acetoxydehydroaustin. The first step of the pathway is the synthesis of 3,5-dimethylorsellinic acid by the polyketide synthase ausA. 3,5-dimethylorsellinic acid is then prenylated by the polyprenyl transferase ausN. Further epoxidation by the FAD-dependent monooxygenase ausM and cyclization by the probable terpene cyclase ausL lead to the formation of protoaustinoid A. Protoaustinoid A is then oxidized to spiro-lactone preaustinoid A3 by the combined action of the FAD-binding monooxygenases ausB and ausC, and the dioxygenase ausE. Acid-catalyzed keto-rearrangement and ring contraction of the tetraketide portion of preaustinoid A3 by ausJ lead to the formation of preaustinoid A4. The aldo-keto reductase ausK, with the help of ausH, is involved in the next step by transforming preaustinoid A4 into isoaustinone which is in turn hydroxylated by the P450 monooxygenase ausI to form austinolide. The cytochrome P450 monooxygenase ausG then modifies austinolide to austinol. Austinol is further acetylated to austin by the O-acetyltransferase ausP, which spontaneously changes to dehydroaustin. The cytochrome P450 monooxygenase then converts dehydroaustin is into 7-dehydrodehydroaustin. The hydroxylation catalyzed by ausR permits the second O-acetyltransferase ausQ to add an additional acetyl group to the molecule, leading to the formation of acetoxydehydroaustin. Due to genetic rearrangements of the clusters and the subsequent loss of some enzymes, the end product of the Penicillium brasilianum austinoid biosynthesis clusters is acetoxydehydroaustin. This chain is Cytochrome P450 monooxygenase ausR, found in Penicillium brasilianum.